The following is a 184-amino-acid chain: Protein DESIGUAL 3 (184 aa).

The signal sequence occupies residues 1-24; sequence MESELGFLVSVVIICADITATVLG. Residues 34-45 show a composition bias toward basic residues; it reads APHHHHQQHSRH. Residues 34 to 53 are disordered; it reads APHHHHQQHSRHSGSGCRRS. The next 3 membrane-spanning stretches (helical) occupy residues 62 to 82, 99 to 119, and 140 to 160; these read GVAA…LGGC, ILAV…YSTL, and FFLI…AYYV. Residue Asn180 is glycosylated (N-linked (GlcNAc...) asparagine).

The protein belongs to the DESIGUAL family. As to expression, mainly expressed in roots, inflorescences and developing leaves, and, at low levels, in mature leaves.

It localises to the endoplasmic reticulum membrane. Functionally, involved, partially redundantly with VCC/DEAL1 and DEAL2, to ensure bilateral symmetry development and early leaf margin patterning, probably via the regulation of auxin and CUC2 distribution. This is Protein DESIGUAL 3 from Arabidopsis thaliana (Mouse-ear cress).